The primary structure comprises 458 residues: BPI fold-containing family B member 2 (458 aa).

Residues 1–20 (MAWASRLGLLLALLLPVVGA) form the signal peptide. Thr-52 bears the Phosphothreonine; by FAM20C mark. Ser-60 carries the post-translational modification Phosphoserine; by FAM20C. N-linked (GlcNAc...) asparagine glycans are attached at residues Asn-96, Asn-151, Asn-293, and Asn-332. The cysteines at positions 137 and 174 are disulfide-linked.

Belongs to the BPI/LBP/Plunc superfamily. BPI/LBP family. Highly expressed in tonsils, especially in hypertrophic tonsils. Detected at very low levels in fetal liver.

It is found in the secreted. The polypeptide is BPI fold-containing family B member 2 (BPIFB2) (Homo sapiens (Human)).